The primary structure comprises 381 residues: Heme A synthase (381 aa).

5 helical membrane passes run 25-45, 112-132, 138-158, 176-196, and 212-232; these read GAVR…VAVG, LLGR…WWRG, LLLG…IGWI, LALH…LAAG, and VAGL…LVAG. Residue histidine 277 coordinates heme. The next 3 membrane-spanning stretches (helical) occupy residues 279-299, 307-327, and 329-349; these read LFAY…VRMA, AMGV…TLLL, and VPLW…IMAT. Residue histidine 337 participates in heme binding.

It belongs to the COX15/CtaA family. Type 2 subfamily. Interacts with CtaB. Heme b is required as a cofactor.

Its subcellular location is the cell membrane. The catalysed reaction is Fe(II)-heme o + 2 A + H2O = Fe(II)-heme a + 2 AH2. Its pathway is porphyrin-containing compound metabolism; heme A biosynthesis; heme A from heme O: step 1/1. Its function is as follows. Catalyzes the conversion of heme O to heme A by two successive hydroxylations of the methyl group at C8. The first hydroxylation forms heme I, the second hydroxylation results in an unstable dihydroxymethyl group, which spontaneously dehydrates, resulting in the formyl group of heme A. The polypeptide is Heme A synthase (Methylorubrum populi (strain ATCC BAA-705 / NCIMB 13946 / BJ001) (Methylobacterium populi)).